We begin with the raw amino-acid sequence, 161 residues long: S-protein homolog 2 (161 aa).

The N-terminal stretch at 1–24 (MDIPKQYLSLFILIIFITTKLSQA) is a signal peptide. Asn75, Asn106, and Asn157 each carry an N-linked (GlcNAc...) asparagine glycan.

This sequence belongs to the plant self-incompatibility (S1) protein family.

It localises to the secreted. The chain is S-protein homolog 2 from Arabidopsis thaliana (Mouse-ear cress).